A 217-amino-acid polypeptide reads, in one-letter code: Large ribosomal subunit protein uL3 (217 aa).

Residues 127–162 (GFSRGPMSHGSKNHRAPGSTGAGTTPGRIYPGKRMA) are disordered. A compositionally biased stretch (low complexity) spans 142-153 (APGSTGAGTTPG).

Belongs to the universal ribosomal protein uL3 family. In terms of assembly, part of the 50S ribosomal subunit. Forms a cluster with proteins L14 and L19.

One of the primary rRNA binding proteins, it binds directly near the 3'-end of the 23S rRNA, where it nucleates assembly of the 50S subunit. The protein is Large ribosomal subunit protein uL3 of Prochlorococcus marinus (strain AS9601).